A 124-amino-acid chain; its full sequence is Fluoride-specific ion channel FluC (124 aa).

Transmembrane regions (helical) follow at residues 4–24, 35–55, 67–87, and 100–120; these read FVLV…LSGV, YGTV…WGIL, LLLL…TYEG, and ALYI…GAGL. Residues G75 and T78 each contribute to the Na(+) site.

It belongs to the fluoride channel Fluc/FEX (TC 1.A.43) family.

It is found in the cell inner membrane. It carries out the reaction fluoride(in) = fluoride(out). With respect to regulation, na(+) is not transported, but it plays an essential structural role and its presence is essential for fluoride channel function. In terms of biological role, fluoride-specific ion channel. Important for reducing fluoride concentration in the cell, thus reducing its toxicity. This is Fluoride-specific ion channel FluC from Nitratidesulfovibrio vulgaris (strain ATCC 29579 / DSM 644 / CCUG 34227 / NCIMB 8303 / VKM B-1760 / Hildenborough) (Desulfovibrio vulgaris).